The sequence spans 1177 residues: Phospholipid-transporting ATPase IF (1177 aa).

At 1 to 55 (MWRWIRQQLGFDPPHQSDTRTIYVANRFPQNGLYTPQKFIDNRIISSKYTVWNFV) the chain is on the cytoplasmic side. Residues 56–77 (PKNLFEQFRRVANFYFLIIFLV) form a helical membrane-spanning segment. Topologically, residues 78 to 82 (QLMID) are extracellular. The chain crosses the membrane as a helical span at residues 83–104 (TPTSPVTSGLPLFFVITVTAIK). At 105–289 (QGYEDWLRHN…SAVEKSMNTF (185 aa)) the chain is on the cytoplasmic side. The helical transmembrane segment at 290–311 (LIIYLVILISEAVISTILKYTW) threads the bilayer. At 312–341 (QAEEKWDEPWYNQKTEHQRNSSKILRFISD) the chain is on the extracellular side. The chain crosses the membrane as a helical span at residues 342 to 359 (FLAFLVLYNFIIPISLYV). Topologically, residues 360–876 (TVEMQKFLGS…HGHFYYIRIA (517 aa)) are cytoplasmic. The active-site 4-aspartylphosphate intermediate is aspartate 407. Residues aspartate 407, lysine 408, threonine 409, glutamate 531, phenylalanine 572, lysine 595, arginine 626, threonine 706, glycine 707, aspartate 708, arginine 794, and lysine 800 each coordinate ATP. Aspartate 407 is a binding site for Mg(2+). Threonine 409 serves as a coordination point for Mg(2+). Residue aspartate 821 participates in Mg(2+) binding. Residues asparagine 824 and aspartate 825 each coordinate ATP. Position 825 (aspartate 825) interacts with Mg(2+). The helical transmembrane segment at 877-898 (TLVQYFFYKNVCFITPQFLYQF) threads the bilayer. Residues 899–910 (YCLFSQQTLYDS) lie on the Extracellular side of the membrane. A helical transmembrane segment spans residues 911 to 930 (VYLTLYNICFTSLPILIYSL). Residues 931–960 (LEQHVDPHVLQNKPTLYRDISKNRLLSIKT) lie on the Cytoplasmic side of the membrane. A helical transmembrane segment spans residues 961 to 982 (FLYWTILGFSHAFIFFFGSYLL). The Extracellular portion of the chain corresponds to 983–997 (IGKDTSLLGNGQMFG). A helical transmembrane segment spans residues 998–1020 (NWTFGTLVFTVMVITVTVKMALE). The Cytoplasmic portion of the chain corresponds to 1021–1025 (THFWT). A helical membrane pass occupies residues 1026–1047 (WINHLVTWGSIIFYFVFSLFYG). At 1048 to 1065 (GILWPFLGSQNMYFVFIQ) the chain is on the extracellular side. Residues 1066–1090 (LLSSGSAWFAIILMVVTCLFLDIIK) form a helical membrane-spanning segment. Topologically, residues 1091-1177 (KVFDRHLHPT…TLSTMDSSTC (87 aa)) are cytoplasmic. Serine 1154 bears the Phosphoserine mark.

Belongs to the cation transport ATPase (P-type) (TC 3.A.3) family. Type IV subfamily. Component of a P4-ATPase flippase complex which consists of a catalytic alpha subunit ATP11B and an accessory beta subunit TMEM30A. Mg(2+) serves as cofactor.

The protein resides in the recycling endosome membrane. It is found in the early endosome. Its subcellular location is the endoplasmic reticulum. It localises to the golgi apparatus. The protein localises to the trans-Golgi network. The enzyme catalyses ATP + H2O + phospholipidSide 1 = ADP + phosphate + phospholipidSide 2.. It catalyses the reaction a 1,2-diacyl-sn-glycero-3-phospho-L-serine(out) + ATP + H2O = a 1,2-diacyl-sn-glycero-3-phospho-L-serine(in) + ADP + phosphate + H(+). It carries out the reaction a 1,2-diacyl-sn-glycero-3-phosphoethanolamine(out) + ATP + H2O = a 1,2-diacyl-sn-glycero-3-phosphoethanolamine(in) + ADP + phosphate + H(+). The ATPase activity is up-regulated by aminophospholipids PS and PE. Its function is as follows. Catalytic component of a P4-ATPase flippase complex which catalyzes the hydrolysis of ATP coupled to the transport of aminophospholipids, phosphatidylserines (PS) and phosphatidylethanolamines (PE), from the outer to the inner leaflet of intracellular membranes. May contribute to the maintenance of membrane lipid asymmetry in endosome compartment. In Homo sapiens (Human), this protein is Phospholipid-transporting ATPase IF (ATP11B).